Consider the following 432-residue polypeptide: Trigger factor (432 aa).

The 86-residue stretch at 161 to 246 folds into the PPIase FKBP-type domain; it reads GTRATINFVG…VVKVEARELP (86 aa).

Belongs to the FKBP-type PPIase family. Tig subfamily.

Its subcellular location is the cytoplasm. The catalysed reaction is [protein]-peptidylproline (omega=180) = [protein]-peptidylproline (omega=0). Its function is as follows. Involved in protein export. Acts as a chaperone by maintaining the newly synthesized protein in an open conformation. Functions as a peptidyl-prolyl cis-trans isomerase. The polypeptide is Trigger factor (Aliivibrio fischeri (strain MJ11) (Vibrio fischeri)).